The following is a 483-amino-acid chain: Inositol-pentakisphosphate 2-kinase (483 aa).

The EXKPK motif signature appears at 140–144; it reads EIKPK. The segment at 279–298 is disordered; sequence SNRSGEPRKMHLSESKPHCE. Basic and acidic residues predominate over residues 281–297; that stretch reads RSGEPRKMHLSESKPHC.

The protein belongs to the IPK1 type 2 family. As to expression, expressed both maternally and zygotically. Expressed in cleavage-stage embryos. Ubiquitously distributed throughout blastula stages of embryogenesis. At the onset of gastrulation, it is enriched in cells around the blastoderm margin. At shield stage, expression is detected in the deep involuted cells that contribute to mesendoderm. During mid and late gastrula stages, it is strongly expressed in axial mesendoderm. However, it is not present in the nascent tailbud at yolk plug closure (YPC) stage. Expression in axial mesendoderm is reduced at the 2 somite stage (SS). At 6 SS, it is expressed in cells surrounding Kupffer's vesicle, but apparently not within. By 10 SS, it is no longer detected as a specific signal above background.

The protein resides in the cytoplasm. It localises to the nucleus. It carries out the reaction 1D-myo-inositol 1,3,4,5,6-pentakisphosphate + ATP = 1D-myo-inositol hexakisphosphate + ADP + H(+). Its function is as follows. Phosphorylates Ins(1,3,4,5,6)P5 at position 2 to form Ins(1,2,3,4,5,6)P6 (InsP6 or phytate). InsP6 is involved in many processes such as mRNA export, non-homologous end-joining, endocytosis and ion channel regulation. InsP6 also acts as a key regulator of left-right asymmetry in embryo, probably by regulating asymmetric Ca(2+) during left-right specification. This is Inositol-pentakisphosphate 2-kinase (ippk) from Danio rerio (Zebrafish).